Reading from the N-terminus, the 287-residue chain is Protein-export membrane protein SecF (287 aa).

Helical transmembrane passes span 21-41 (LIAIPAAITVIALLLVVFNGL), 129-149 (QIYWAIGFAFLFMSVTVFIIF), 158-178 (VILAAASDIIIAVGGMSLFGI), 182-202 (LASVGAILMLIGYSVDTDILL), 226-246 (VTMSIAAIASMAALYLVTVFV), and 259-279 (VLIIGLLADILTTWLMNLGIL).

It belongs to the SecD/SecF family. SecF subfamily. In terms of assembly, part of the protein translocation apparatus. Forms a complex with SecD.

The protein localises to the cell membrane. Functionally, involved in protein export. The protein is Protein-export membrane protein SecF of Methanothermobacter thermautotrophicus (strain ATCC 29096 / DSM 1053 / JCM 10044 / NBRC 100330 / Delta H) (Methanobacterium thermoautotrophicum).